The chain runs to 614 residues: UvrABC system protein C (614 aa).

In terms of domain architecture, GIY-YIG spans 26 to 104 (NLPGVYKMLG…IKEYRPPYNV (79 aa)). Residues 215-250 (SDIHSALIEKMEASAEELDFEKAVFYRDQLSMLREV) form the UVR domain.

The protein belongs to the UvrC family. Interacts with UvrB in an incision complex.

The protein resides in the cytoplasm. In terms of biological role, the UvrABC repair system catalyzes the recognition and processing of DNA lesions. UvrC both incises the 5' and 3' sides of the lesion. The N-terminal half is responsible for the 3' incision and the C-terminal half is responsible for the 5' incision. This chain is UvrABC system protein C, found in Psychrobacter arcticus (strain DSM 17307 / VKM B-2377 / 273-4).